Reading from the N-terminus, the 720-residue chain is Methionine--tRNA ligase (720 aa).

A 'HIGH' region motif is present at residues 27–37 (PYANGQIHIGH). Zn(2+) is bound by residues Cys-158, Cys-161, Cys-171, and Cys-174. The 'KMSKS' region motif lies at 348-352 (KMSKS). Lys-351 lines the ATP pocket. The tRNA-binding domain maps to 614 to 720 (DFAKVDLRIA…SGAKPGMRVK (107 aa)).

The protein belongs to the class-I aminoacyl-tRNA synthetase family. MetG type 1 subfamily. As to quaternary structure, homodimer. Zn(2+) is required as a cofactor.

It localises to the cytoplasm. It carries out the reaction tRNA(Met) + L-methionine + ATP = L-methionyl-tRNA(Met) + AMP + diphosphate. Functionally, is required not only for elongation of protein synthesis but also for the initiation of all mRNA translation through initiator tRNA(fMet) aminoacylation. This chain is Methionine--tRNA ligase, found in Burkholderia ambifaria (strain ATCC BAA-244 / DSM 16087 / CCUG 44356 / LMG 19182 / AMMD) (Burkholderia cepacia (strain AMMD)).